The primary structure comprises 185 residues: Large ribosomal subunit protein uL16m (185 aa).

The protein belongs to the universal ribosomal protein uL16 family.

It is found in the mitochondrion. The protein is Large ribosomal subunit protein uL16m (RPL16) of Oryza sativa subsp. japonica (Rice).